We begin with the raw amino-acid sequence, 356 residues long: PEP-dependent dihydroxyacetone kinase, dihydroxyacetone-binding subunit DhaK (356 aa).

Positions 7 to 352 (DVQDVLDEQL…WDAPVHTPAL (346 aa)) constitute a DhaK domain. Dihydroxyacetone-binding positions include 53 to 56 (GSGH), K104, and D109. The Proton acceptor role is filled by H56. The active-site Tele-hemiaminal-histidine intermediate is H218.

Homodimer. The dihydroxyacetone kinase complex is composed of a homodimer of DhaM, a homodimer of DhaK and the subunit DhaL. DhaL also forms a complex with DhaR.

It catalyses the reaction dihydroxyacetone + phosphoenolpyruvate = dihydroxyacetone phosphate + pyruvate. It participates in polyol metabolism; glycerol degradation. Its activity is regulated as follows. Inhibited by chloro-3-hydroxyacetone and D,L-glyceraldehyde. Its function is as follows. Dihydroxyacetone binding subunit of the dihydroxyacetone kinase, which is responsible for the phosphoenolpyruvate (PEP)-dependent phosphorylation of dihydroxyacetone via a phosphoryl group transfer from DhaL-ATP. Binds covalently dihydroxyacetone in hemiaminal linkage. DhaK also acts as corepressor of the transcription activator DhaR by binding to the sensor domain of DhaR. In the presence of dihydroxyacetone, DhaL-ADP displaces DhaK and stimulates DhaR activity. In the absence of dihydroxyacetone, DhaL-ADP is converted by the PTS to DhaL-ATP, which does not bind to DhaR. In Escherichia coli (strain K12), this protein is PEP-dependent dihydroxyacetone kinase, dihydroxyacetone-binding subunit DhaK.